Reading from the N-terminus, the 472-residue chain is Ribosomal protein uS12 methylthiotransferase RimO (472 aa).

The region spanning Met-1–Arg-114 is the MTTase N-terminal domain. Cys-10, Cys-46, Cys-78, Cys-171, Cys-175, and Cys-178 together coordinate [4Fe-4S] cluster. The region spanning Arg-157 to Gln-388 is the Radical SAM core domain. The TRAM domain occupies Arg-391–Glu-460.

The protein belongs to the methylthiotransferase family. RimO subfamily. [4Fe-4S] cluster serves as cofactor.

It is found in the cytoplasm. It carries out the reaction L-aspartate(89)-[ribosomal protein uS12]-hydrogen + (sulfur carrier)-SH + AH2 + 2 S-adenosyl-L-methionine = 3-methylsulfanyl-L-aspartate(89)-[ribosomal protein uS12]-hydrogen + (sulfur carrier)-H + 5'-deoxyadenosine + L-methionine + A + S-adenosyl-L-homocysteine + 2 H(+). Its function is as follows. Catalyzes the methylthiolation of an aspartic acid residue of ribosomal protein uS12. This is Ribosomal protein uS12 methylthiotransferase RimO from Roseiflexus sp. (strain RS-1).